A 488-amino-acid polypeptide reads, in one-letter code: Cysteine--tRNA ligase (488 aa).

C29 serves as a coordination point for Zn(2+). The short motif at 31–41 (ATVQGMPHVGH) is the 'HIGH' region element. Residues C227, H252, and E256 each contribute to the Zn(2+) site. A 'KMSKS' region motif is present at residues 283–287 (KMSKS). K286 is an ATP binding site.

Belongs to the class-I aminoacyl-tRNA synthetase family. In terms of assembly, monomer. The cofactor is Zn(2+).

It localises to the cytoplasm. The enzyme catalyses tRNA(Cys) + L-cysteine + ATP = L-cysteinyl-tRNA(Cys) + AMP + diphosphate. This chain is Cysteine--tRNA ligase, found in Pseudarthrobacter chlorophenolicus (strain ATCC 700700 / DSM 12829 / CIP 107037 / JCM 12360 / KCTC 9906 / NCIMB 13794 / A6) (Arthrobacter chlorophenolicus).